The primary structure comprises 165 residues: Phosphopantetheine adenylyltransferase (165 aa).

Residue Thr-9 participates in substrate binding. ATP-binding positions include 9-10 and His-17; that span reads TF. Positions 41, 73, and 87 each coordinate substrate. ATP is bound by residues 88 to 90, Glu-98, and 123 to 129; these read GLR and YQFISGT.

It belongs to the bacterial CoaD family. Homohexamer. The cofactor is Mg(2+).

The protein localises to the cytoplasm. The catalysed reaction is (R)-4'-phosphopantetheine + ATP + H(+) = 3'-dephospho-CoA + diphosphate. It functions in the pathway cofactor biosynthesis; coenzyme A biosynthesis; CoA from (R)-pantothenate: step 4/5. Its function is as follows. Reversibly transfers an adenylyl group from ATP to 4'-phosphopantetheine, yielding dephospho-CoA (dPCoA) and pyrophosphate. This Burkholderia orbicola (strain MC0-3) protein is Phosphopantetheine adenylyltransferase.